The primary structure comprises 396 residues: Acetate kinase (396 aa).

Residue asparagine 7 coordinates Mg(2+). Lysine 14 contacts ATP. A substrate-binding site is contributed by arginine 88. The Proton donor/acceptor role is filled by aspartate 145. ATP is bound by residues 205–209, 279–281, and 327–331; these read HLGNG, DFR, and GIGEN. Glutamate 381 is a binding site for Mg(2+).

Belongs to the acetokinase family. Homodimer. Mg(2+) serves as cofactor. It depends on Mn(2+) as a cofactor.

The protein resides in the cytoplasm. The enzyme catalyses acetate + ATP = acetyl phosphate + ADP. Its pathway is metabolic intermediate biosynthesis; acetyl-CoA biosynthesis; acetyl-CoA from acetate: step 1/2. Catalyzes the formation of acetyl phosphate from acetate and ATP. Can also catalyze the reverse reaction. The chain is Acetate kinase from Campylobacter jejuni subsp. jejuni serotype O:2 (strain ATCC 700819 / NCTC 11168).